Reading from the N-terminus, the 493-residue chain is Glycerol kinase (493 aa).

Threonine 13 provides a ligand contact to ADP. The ATP site is built by threonine 13, threonine 14, and serine 15. Residue threonine 13 participates in sn-glycerol 3-phosphate binding. Residue arginine 17 coordinates ADP. Residues arginine 83, glutamate 84, tyrosine 135, and aspartate 244 each coordinate sn-glycerol 3-phosphate. The glycerol site is built by arginine 83, glutamate 84, tyrosine 135, aspartate 244, and glutamine 245. ADP contacts are provided by threonine 266 and glycine 309. Threonine 266, glycine 309, glutamine 313, and glycine 410 together coordinate ATP. Residues glycine 410 and asparagine 414 each coordinate ADP.

It belongs to the FGGY kinase family.

It catalyses the reaction glycerol + ATP = sn-glycerol 3-phosphate + ADP + H(+). It participates in polyol metabolism; glycerol degradation via glycerol kinase pathway; sn-glycerol 3-phosphate from glycerol: step 1/1. Inhibited by fructose 1,6-bisphosphate (FBP). Its function is as follows. Key enzyme in the regulation of glycerol uptake and metabolism. Catalyzes the phosphorylation of glycerol to yield sn-glycerol 3-phosphate. This Shewanella piezotolerans (strain WP3 / JCM 13877) protein is Glycerol kinase.